The primary structure comprises 565 residues: Thiol:disulfide interchange protein DsbD (565 aa).

The first 19 residues, 1–19 (MAQRIFTLILLLCSTSVFA), serve as a signal peptide directing secretion. At 20–162 (GLFDAPGRSQ…VPQQEQPTAQ (143 aa)) the chain is on the periplasmic side. 2 disulfide bridges follow: Cys122–Cys128 and Cys182–Cys304. The chain crosses the membrane as a helical span at residues 163–183 (LPFSALWALLIGIGIAFTPCV). The Cytoplasmic segment spans residues 184–207 (LPMYPLISGIVLGGKQRLSTARAL). The helical transmembrane segment at 208-228 (LLTFIYVQGMALTYTALGLVV) threads the bilayer. The Periplasmic portion of the chain corresponds to 229-242 (AAAGLQFQAALQHP). The helical transmembrane segment at 243 to 263 (YVLIGLTIVFTLLAMSMFGLL) threads the bilayer. Residues 264 to 295 (TLQLPSSLQTRLTLMSNRQQGGSPGGVFIMGT) are Cytoplasmic-facing. The chain crosses the membrane as a helical span at residues 296 to 316 (IAGLICSPCTTAPLSAILLYI). Residues 317 to 322 (AQSGNM) lie on the Periplasmic side of the membrane. Residues 323 to 343 (WLGGGTLYLYALGMGLPLMLI) traverse the membrane as a helical segment. At 344–356 (TVFGNRLLPKSGP) the chain is on the cytoplasmic side. A helical transmembrane segment spans residues 357–377 (WMEQVKTAFGFVILALPVFLL). Residues 378–383 (ERVIGD) are Periplasmic-facing. A helical membrane pass occupies residues 384-404 (VWGLRLWSALGVAFFGWAFIT). The Cytoplasmic portion of the chain corresponds to 405–417 (SLQAKRGWMRVVQ). A helical membrane pass occupies residues 418–438 (IILLAAALVSVRPLQDWAFGA). In terms of domain architecture, Thioredoxin spans 434–565 (WAFGATHTAQ…FSAHLRDRQP (132 aa)). Residues 439-565 (THTAQTQTHL…FSAHLRDRQP (127 aa)) are Periplasmic-facing. Cys480 and Cys483 are joined by a disulfide.

The protein belongs to the thioredoxin family. DsbD subfamily.

The protein resides in the cell inner membrane. It carries out the reaction [protein]-dithiol + NAD(+) = [protein]-disulfide + NADH + H(+). It catalyses the reaction [protein]-dithiol + NADP(+) = [protein]-disulfide + NADPH + H(+). Its function is as follows. Required to facilitate the formation of correct disulfide bonds in some periplasmic proteins and for the assembly of the periplasmic c-type cytochromes. Acts by transferring electrons from cytoplasmic thioredoxin to the periplasm. This transfer involves a cascade of disulfide bond formation and reduction steps. In Escherichia coli O157:H7, this protein is Thiol:disulfide interchange protein DsbD.